We begin with the raw amino-acid sequence, 70 residues long: UPF0270 protein VIBHAR_00073 (70 aa).

The protein belongs to the UPF0270 family.

The protein is UPF0270 protein VIBHAR_00073 of Vibrio campbellii (strain ATCC BAA-1116).